The sequence spans 397 residues: Class V chitinase CHIT5 (397 aa).

The signal sequence occupies residues 1–18 (MIIKLLVALIHYLHETMA). Residues 54–397 (GVRAAYWPAW…SKQASNAWGY (344 aa)) form the GH18 domain. Residues Asn128 and Asn147 are each glycosylated (N-linked (GlcNAc...) asparagine). Residue Glu166 is the Proton donor of the active site. N-linked (GlcNAc...) asparagine glycosylation is found at Asn193, Asn209, Asn247, and Asn261.

The protein belongs to the glycosyl hydrolase 18 family. Chitinase class V subfamily.

It catalyses the reaction Random endo-hydrolysis of N-acetyl-beta-D-glucosaminide (1-&gt;4)-beta-linkages in chitin and chitodextrins.. It functions in the pathway glycan degradation; chitin degradation. In terms of biological role, possesses chitinase activity in vitro toward glycol chitin, carboxymethyl-chitin, colloidal chitin, and the chitin oligosaccharides (N-acetylglucosamine) (GlcNAc)6 and (GlcNAc)5. Hydrolyzes (GlcNAc)6 into (GlcNAc)4 and (GlcNAc)2, or two (GlcNAc)3 molecules. Has the capacity to inhibit hyphal growth of the fungus Trichoderma viride in an agar-plate bioassay. Involved in symbiotic signaling. Required for root hair infection threads (ITs) elongation and nodule development. Possesses Nod factor (NF) hydrolase activity. NFs are lipo-chitooligosaccharide signaling molecules produced by nitrogen-fixing rhizobia to initiate nodulation (symbiosis) on the roots of legumes. Modulates NF levels and signaling to complete transition of infected nodules to functional nitrogen-fixing organs. In Lotus japonicus (Lotus corniculatus var. japonicus), this protein is Class V chitinase CHIT5.